Here is a 213-residue protein sequence, read N- to C-terminus: MENISIALPKGRMADSAITLFEKAGIAENILKDISRKLVVNDHKNLMKFMLVKPMDVPTYVEHGAADLGICGKDILLEQKKDCYEVLDLKFGFCKMVVAGPKEAKDSFLTNKRVATKFPNIAEEFFRQKGENVEIIKLNGSVELAPIVGLSEVIVDIVETGNTLRENGLIVIEEIFPSSARLIVNKASLKTKSQRIKEIIIKLKEVVETFKEV.

The protein belongs to the ATP phosphoribosyltransferase family. Short subfamily. As to quaternary structure, heteromultimer composed of HisG and HisZ subunits.

It localises to the cytoplasm. The catalysed reaction is 1-(5-phospho-beta-D-ribosyl)-ATP + diphosphate = 5-phospho-alpha-D-ribose 1-diphosphate + ATP. It participates in amino-acid biosynthesis; L-histidine biosynthesis; L-histidine from 5-phospho-alpha-D-ribose 1-diphosphate: step 1/9. Catalyzes the condensation of ATP and 5-phosphoribose 1-diphosphate to form N'-(5'-phosphoribosyl)-ATP (PR-ATP). Has a crucial role in the pathway because the rate of histidine biosynthesis seems to be controlled primarily by regulation of HisG enzymatic activity. The polypeptide is ATP phosphoribosyltransferase (Thermoanaerobacter pseudethanolicus (strain ATCC 33223 / 39E) (Clostridium thermohydrosulfuricum)).